We begin with the raw amino-acid sequence, 120 residues long: Myohemerythrin (120 aa).

Fe cation is bound by residues His-26, His-56, Glu-60, His-75, His-79, His-108, and Asp-113.

The protein belongs to the hemerythrin family.

Myohemerythrin is an oxygen-binding protein found in the retractor muscles of certain worms. The oxygen-binding site contains two iron atoms. The chain is Myohemerythrin from Riftia pachyptila (Vent tube worm).